The primary structure comprises 352 residues: tRNA uridine(34) hydroxylase (352 aa).

In terms of domain architecture, Rhodanese spans 144–238 (SDPDVILIDT…YLEEVPASDS (95 aa)). Cys-198 (cysteine persulfide intermediate) is an active-site residue.

This sequence belongs to the TrhO family.

It carries out the reaction uridine(34) in tRNA + AH2 + O2 = 5-hydroxyuridine(34) in tRNA + A + H2O. In terms of biological role, catalyzes oxygen-dependent 5-hydroxyuridine (ho5U) modification at position 34 in tRNAs. This chain is tRNA uridine(34) hydroxylase, found in Psychrobacter cryohalolentis (strain ATCC BAA-1226 / DSM 17306 / VKM B-2378 / K5).